The primary structure comprises 209 residues: Redox-sensing transcriptional repressor Rex (209 aa).

A DNA-binding region (H-T-H motif) is located at residues 16–55; the sequence is LYYRFIQNLSLSGKQRVSSAELSEAVKVDSATIRRDFSYF. Residue 90 to 95 participates in NAD(+) binding; sequence GVGNLG.

This sequence belongs to the transcriptional regulatory Rex family. Homodimer.

The protein resides in the cytoplasm. In terms of biological role, modulates transcription in response to changes in cellular NADH/NAD(+) redox state. The sequence is that of Redox-sensing transcriptional repressor Rex from Bacillus thuringiensis (strain Al Hakam).